Reading from the N-terminus, the 538-residue chain is Chaperonin GroEL 1 (538 aa).

ATP contacts are provided by residues threonine 29–proline 32, aspartate 86–threonine 90, glycine 413, asparagine 478–alanine 480, and aspartate 494.

Belongs to the chaperonin (HSP60) family. As to quaternary structure, forms a cylinder of 14 subunits composed of two heptameric rings stacked back-to-back. Interacts with the co-chaperonin GroES.

It localises to the cytoplasm. It catalyses the reaction ATP + H2O + a folded polypeptide = ADP + phosphate + an unfolded polypeptide.. Functionally, together with its co-chaperonin GroES, plays an essential role in assisting protein folding. The GroEL-GroES system forms a nano-cage that allows encapsulation of the non-native substrate proteins and provides a physical environment optimized to promote and accelerate protein folding. The chain is Chaperonin GroEL 1 from Corynebacterium glutamicum (strain ATCC 13032 / DSM 20300 / JCM 1318 / BCRC 11384 / CCUG 27702 / LMG 3730 / NBRC 12168 / NCIMB 10025 / NRRL B-2784 / 534).